Reading from the N-terminus, the 1064-residue chain is Carbamoyl phosphate synthase pyrimidine-specific large chain (1064 aa).

The segment at 1-401 is carboxyphosphate synthetic domain; the sequence is MPKRRDIETI…SLLKAVRSLE (401 aa). ATP contacts are provided by R129, R169, G175, G176, R208, I210, G241, I242, H243, Q284, and E298. One can recognise an ATP-grasp 1 domain in the interval 133–327; the sequence is RALMNELGEP…IAKLAAKIAV (195 aa). The Mg(2+) site is built by Q284, E298, and N300. Residues Q284, E298, and N300 each contribute to the Mn(2+) site. Residues 402 to 546 are oligomerization domain; that stretch reads IGVHHLELNE…YSTYEEENES (145 aa). The tract at residues 547 to 929 is carbamoyl phosphate synthetic domain; the sequence is IVTEKPSVIV…ALYKGLVASG (383 aa). The ATP-grasp 2 domain maps to 671 to 861; it reads EQALSELGIP…MANLATKAIL (191 aa). R707, R746, I748, E752, G777, V778, H779, S780, Q820, and E832 together coordinate ATP. Residues Q820, E832, and N834 each coordinate Mg(2+). The Mn(2+) site is built by Q820, E832, and N834. Positions 930–1064 constitute an MGS-like domain; the sequence is IQIQPHGAVL…TAMTEGLVRS (135 aa). Positions 930 to 1064 are allosteric domain; that stretch reads IQIQPHGAVL…TAMTEGLVRS (135 aa).

This sequence belongs to the CarB family. Composed of two chains; the small (or glutamine) chain promotes the hydrolysis of glutamine to ammonia, which is used by the large (or ammonia) chain to synthesize carbamoyl phosphate. Tetramer of heterodimers (alpha,beta)4. It depends on Mg(2+) as a cofactor. The cofactor is Mn(2+).

It carries out the reaction hydrogencarbonate + L-glutamine + 2 ATP + H2O = carbamoyl phosphate + L-glutamate + 2 ADP + phosphate + 2 H(+). The enzyme catalyses hydrogencarbonate + NH4(+) + 2 ATP = carbamoyl phosphate + 2 ADP + phosphate + 2 H(+). It functions in the pathway amino-acid biosynthesis; L-arginine biosynthesis; carbamoyl phosphate from bicarbonate: step 1/1. It participates in pyrimidine metabolism; UMP biosynthesis via de novo pathway; (S)-dihydroorotate from bicarbonate: step 1/3. In terms of biological role, small subunit of the glutamine-dependent carbamoyl phosphate synthetase (CPSase). CPSase catalyzes the formation of carbamoyl phosphate from the ammonia moiety of glutamine, carbonate, and phosphate donated by ATP, constituting the first step of the biosynthetic pathway leading to pyrimidine nucleotides. The large subunit (synthetase) binds the substrates ammonia (free or transferred from glutamine from the small subunit), hydrogencarbonate and ATP and carries out an ATP-coupled ligase reaction, activating hydrogencarbonate by forming carboxy phosphate which reacts with ammonia to form carbamoyl phosphate. In Geobacillus stearothermophilus (Bacillus stearothermophilus), this protein is Carbamoyl phosphate synthase pyrimidine-specific large chain (pyrAB).